The chain runs to 554 residues: Malate synthase 1 (554 aa).

The Proton acceptor role is filled by arginine 177. Residue aspartate 457 is the Proton donor of the active site. The SKL peroxisome targeting motif motif lies at 552–554 (SKL).

It belongs to the malate synthase family. In terms of assembly, interacts with PEX9.

Its subcellular location is the peroxisome matrix. It carries out the reaction glyoxylate + acetyl-CoA + H2O = (S)-malate + CoA + H(+). Its pathway is carbohydrate metabolism; glyoxylate cycle; (S)-malate from isocitrate: step 2/2. In terms of biological role, malate synthase which takes part in the glyoxylate cycle. MLS1 activity is essential for cells to grow on oleic acid as a sole carbon source. Two steps of the glyoxylate cycle take place in the cytosol, the splitting of isocitrate into succinate and glyoxylate, and the dehydrogenation of malate to oxaloacetate. However, the formation of malate from glyoxylate and acetyl-CoA undertaken MLS1, occurs in the peroxisomes when cells are grown on oleic acid. The source of acetyl-CoA being either peroxisomal when breaking down fatty acids, or cytosolic when extra-cellular two-carbon substrates are used, therefore, although not strictly essential, the peroxisomal localization of MLS1 appears to be advantageous for cells growing on oleic acid, in that acetyl-CoA production and utilization are thereby intimately compartmentalized together to increase efficiency. The protein is Malate synthase 1 of Saccharomyces cerevisiae (strain ATCC 204508 / S288c) (Baker's yeast).